Reading from the N-terminus, the 478-residue chain is MSVCTEIDYKLYTELRKIAGNSLFLFNEDGDFVEVVSNSSFKFLLPVGLFSSMDIPLKKPIECNTDNDIEHSKNVVMPNLYPFQERVASEVLSSIKKKVELKRPMYVTLHLACGFGKTITTCYLLSVHKKKAVICLPNKMLINQWKRAIESININHLVSVDGVGNLLKELVKKPADILIIVSRHLSNKEFCKKIHVDYDVFVLDESHMYNLMNNSTVTRFLTYYPPKICYFLTATPRRVNRIYCNDVINVSNSSDLKKYIKIVEFFFETYSSDTIRQMVKKLNTNYNKYHMYTEKILAEDVPRNKLILDTIIYDFEKMIVNRLIIVTKLRKHMMFFYTNLIEKFGSDIVYLGDAKNKNISDIVKKIKSINRFIFISTTNYSGTGLDVPTLDSLVICSAVMNSMQIEQILGRICRYSISKTRTVIVFPNTSIKEIKHMIGFFTQKIITLAIEKLGFKKIDKKGNKQEFALCKAFNLQTR.

One can recognise a Helicase ATP-binding domain in the interval 98–254; it reads KVELKRPMYV…NDVINVSNSS (157 aa). ATP is bound at residue 111-118; the sequence is LACGFGKT. The short motif at 204 to 207 is the DESH box element; sequence DESH. The region spanning 307–454 is the Helicase C-terminal domain; the sequence is ILDTIIYDFE…IITLAIEKLG (148 aa).

This sequence belongs to the helicase family. Poxviruses subfamily. As to quaternary structure, interacts with G2. Might be part of a transcription complex composed at least of G2, A18, and H5.

It is found in the virion. Its function is as follows. DNA helicase which seems to act as a postreplicative transcription termination factor. Involved in ATP-dependent release of nascent RNA. Forms a stable complex with single-stranded DNA, and to a lesser extent RNA. This is Transcript termination protein A18 from Erythrocebus patas (Red guenon).